Here is a 278-residue protein sequence, read N- to C-terminus: Pantothenate synthetase (278 aa).

27–34 lines the ATP pocket; that stretch reads MGYLHEGH. Residue His-34 is the Proton donor of the active site. Gln-58 contacts (R)-pantoate. Gln-58 is a binding site for beta-alanine. Residue 144–147 coordinates ATP; the sequence is GQKD. Residue Gln-150 coordinates (R)-pantoate. ATP-binding positions include Val-173 and 181 to 184; that span reads MSSR.

Belongs to the pantothenate synthetase family. As to quaternary structure, homodimer.

The protein resides in the cytoplasm. It carries out the reaction (R)-pantoate + beta-alanine + ATP = (R)-pantothenate + AMP + diphosphate + H(+). The protein operates within cofactor biosynthesis; (R)-pantothenate biosynthesis; (R)-pantothenate from (R)-pantoate and beta-alanine: step 1/1. Catalyzes the condensation of pantoate with beta-alanine in an ATP-dependent reaction via a pantoyl-adenylate intermediate. The sequence is that of Pantothenate synthetase from Roseiflexus castenholzii (strain DSM 13941 / HLO8).